Here is a 357-residue protein sequence, read N- to C-terminus: DNA replication and repair protein RecF (357 aa).

Residue 30-37 coordinates ATP; it reads GANGSGKT.

This sequence belongs to the RecF family.

It is found in the cytoplasm. The RecF protein is involved in DNA metabolism; it is required for DNA replication and normal SOS inducibility. RecF binds preferentially to single-stranded, linear DNA. It also seems to bind ATP. The chain is DNA replication and repair protein RecF from Escherichia fergusonii (strain ATCC 35469 / DSM 13698 / CCUG 18766 / IAM 14443 / JCM 21226 / LMG 7866 / NBRC 102419 / NCTC 12128 / CDC 0568-73).